Consider the following 61-residue polypeptide: NPCCDAATCKMRPGSQCAEGLCCDQCRFMKKGTVCRVSMVDRNDDTCTGLSADCPRNGLYG.

In terms of domain architecture, Disintegrin spans 1–61 (NPCCDAATCK…ADCPRNGLYG (61 aa)). Intrachain disulfides connect Cys3–Cys26, Cys17–Cys23, Cys22–Cys47, and Cys35–Cys54. The Cell attachment site; atypical (MVD) signature appears at 39-41 (MVD).

The protein belongs to the venom metalloproteinase (M12B) family. P-II subfamily. P-IIa sub-subfamily. Monomer. As to expression, expressed by the venom gland.

The protein resides in the secreted. Functionally, recombinant disintegrin rubistatin inhibits ADP-induced platelet aggregation. In addition, it strongly induces apoptosis, and inhibits cell migration and proliferation of the human cancer cell line SK-Mel-28. In Crotalus ruber ruber (Red diamond rattlesnake), this protein is Disintegrin rubistatin.